A 158-amino-acid polypeptide reads, in one-letter code: Ankyrin repeat domain-containing protein 37 (158 aa).

3 ANK repeats span residues 1 to 25, 30 to 59, and 63 to 92; these read MLLL…SVNA, CKQS…DLNQ, and LGEA…QIDL. The Nuclear localization signal signature appears at 129–149; that stretch reads EHPDRNDCVAVLRQKRSLGSV.

Ubiquitinated by the CRL2(FEM1B) complex, leading to its degradation. Mainly expressed in testis, small intestine, colon, blood leukocytes and in pancreatic adenocarcinoma cells.

It is found in the nucleus. It localises to the cytoplasm. The protein is Ankyrin repeat domain-containing protein 37 of Homo sapiens (Human).